A 452-amino-acid polypeptide reads, in one-letter code: Phosphoglucosamine mutase (452 aa).

The active-site Phosphoserine intermediate is serine 97. Positions 97, 236, 238, and 240 each coordinate Mg(2+). At serine 97 the chain carries Phosphoserine.

It belongs to the phosphohexose mutase family. Mg(2+) serves as cofactor. In terms of processing, activated by phosphorylation.

The catalysed reaction is alpha-D-glucosamine 1-phosphate = D-glucosamine 6-phosphate. Catalyzes the conversion of glucosamine-6-phosphate to glucosamine-1-phosphate. The chain is Phosphoglucosamine mutase from Prochlorococcus marinus subsp. pastoris (strain CCMP1986 / NIES-2087 / MED4).